The following is a 197-amino-acid chain: C4-dicarboxylate transport transcriptional regulatory protein DctR (197 aa).

Residues 4 to 120 enclose the Response regulatory domain; the sequence is TVHIVDDEES…HIVDIALSAI (117 aa). Residue Asp-53 is modified to 4-aspartylphosphate. The tract at residues 128–135 is inter-domain linker; it reads AEAQAREA. An HTH luxR-type domain is found at 136–197; it reads VAARRASLSA…RNIADLARMT (62 aa). The segment at residues 160-179 is a DNA-binding region (H-T-H motif); sequence NKQIAERLGIAMRTVEVHRS.

Post-translationally, phosphorylated by DctS.

The protein localises to the cytoplasm. In terms of biological role, member of the two-component regulatory system DctS/DctR involved in the transport of C4-dicarboxylates. DctR functions as a transcriptional repressor of genes for C4-dicarboxylate transport. The sequence is that of C4-dicarboxylate transport transcriptional regulatory protein DctR (dctR) from Rhodobacter capsulatus (Rhodopseudomonas capsulata).